A 314-amino-acid chain; its full sequence is UDP-N-acetylenolpyruvoylglucosamine reductase (314 aa).

An FAD-binding PCMH-type domain is found at 31 to 208; the sequence is RIGGPADYYA…LSARFRLTPK (178 aa). Arg-187 is an active-site residue. Ser-237 serves as the catalytic Proton donor. Residue Glu-307 is part of the active site.

The protein belongs to the MurB family. FAD is required as a cofactor.

Its subcellular location is the cytoplasm. It carries out the reaction UDP-N-acetyl-alpha-D-muramate + NADP(+) = UDP-N-acetyl-3-O-(1-carboxyvinyl)-alpha-D-glucosamine + NADPH + H(+). Its pathway is cell wall biogenesis; peptidoglycan biosynthesis. Functionally, cell wall formation. The polypeptide is UDP-N-acetylenolpyruvoylglucosamine reductase (Agathobacter rectalis (strain ATCC 33656 / DSM 3377 / JCM 17463 / KCTC 5835 / VPI 0990) (Eubacterium rectale)).